The following is a 286-amino-acid chain: Translocon-associated protein subunit alpha (286 aa).

Positions M1–T18 are cleaved as a signal peptide. Topologically, residues V19–T207 are lumenal. A compositionally biased stretch (acidic residues) spans E39–G75. Positions E39–A83 are disordered. Residues N136 and N191 are each glycosylated (N-linked (GlcNAc...) asparagine). The chain crosses the membrane as a helical span at residues I208–L228. Residues L229–E286 lie on the Cytoplasmic side of the membrane. Residue S247 is modified to Phosphoserine. T260 carries the phosphothreonine modification. A disordered region spans residues L261 to E286. Phosphoserine is present on S268. Over residues S268–K279 the composition is skewed to basic residues.

Belongs to the TRAP-alpha family. As to quaternary structure, heterotetramer of TRAP-alpha, TRAP-beta, TRAP-delta and TRAP-gamma. Interacts with palmitoylated calnexin (CALX), the interaction is required for efficient folding of glycosylated proteins.

It localises to the endoplasmic reticulum membrane. Functionally, TRAP proteins are part of a complex whose function is to bind calcium to the ER membrane and thereby regulate the retention of ER resident proteins. May be involved in the recycling of the translocation apparatus after completion of the translocation process or may function as a membrane-bound chaperone facilitating folding of translocated proteins. The sequence is that of Translocon-associated protein subunit alpha (SSR1) from Homo sapiens (Human).